A 107-amino-acid chain; its full sequence is Pro-corazonin (107 aa).

Positions 1 to 21 (MVNSQILILFILSLTITIVMC) are cleaved as a signal peptide. Residue Gln22 is modified to Pyrrolidone carboxylic acid. An Asparagine amide modification is found at Asn32. A propeptide spanning residues 88–107 (SFSENMINDHRQPAPTNNNY) is cleaved from the precursor.

It belongs to the corazonin family. In terms of tissue distribution, in the adult brain, expressed in four neurons of the lateral protocerebrum project axons towards the retrocerebral complex.

The protein resides in the secreted. Its function is as follows. Cardioactive peptide. Corazonin is probably involved in the physiological regulation of the heart beat. This Apis mellifera (Honeybee) protein is Pro-corazonin.